Consider the following 231-residue polypeptide: Large ribosomal subunit protein uL1 (231 aa).

The protein belongs to the universal ribosomal protein uL1 family. In terms of assembly, part of the 50S ribosomal subunit.

Binds directly to 23S rRNA. The L1 stalk is quite mobile in the ribosome, and is involved in E site tRNA release. Its function is as follows. Protein L1 is also a translational repressor protein, it controls the translation of the L11 operon by binding to its mRNA. The protein is Large ribosomal subunit protein uL1 of Halalkalibacterium halodurans (strain ATCC BAA-125 / DSM 18197 / FERM 7344 / JCM 9153 / C-125) (Bacillus halodurans).